Reading from the N-terminus, the 421-residue chain is GTPase Obg (421 aa).

The region spanning 4–161 is the Obg domain; it reads LHFIDEAFNE…FKIKIQLKVL (158 aa). The OBG-type G domain occupies 162-327; the sequence is ADVGLLGFPS…LKYAIKNLLQ (166 aa). Residues 168-175, 193-197, 214-217, 281-284, and 308-310 contribute to the GTP site; these read GFPSVGKS, FTTLF, DLPG, NKMD, and SLI. Residues Ser-175 and Thr-195 each coordinate Mg(2+). An OCT domain is found at 343–421; sequence DLNSETQTFT…ICNYLFDFVI (79 aa).

Belongs to the TRAFAC class OBG-HflX-like GTPase superfamily. OBG GTPase family. As to quaternary structure, monomer. It depends on Mg(2+) as a cofactor.

The protein localises to the cytoplasm. Functionally, an essential GTPase which binds GTP, GDP and possibly (p)ppGpp with moderate affinity, with high nucleotide exchange rates and a fairly low GTP hydrolysis rate. Plays a role in control of the cell cycle, stress response, ribosome biogenesis and in those bacteria that undergo differentiation, in morphogenesis control. This is GTPase Obg from Phytoplasma australiense.